The chain runs to 406 residues: LIM/homeobox protein Lhx1 (406 aa).

2 consecutive LIM zinc-binding domains span residues 4–54 and 63–117; these read CAGC…CKND and CAGC…CKED. Disordered regions lie at residues 128–189 and 294–372; these read NSLH…TIKA and DFFP…SAEV. The span at 137–148 shows a compositional bias: low complexity; the sequence is SDPSLSPDSQDP. Basic and acidic residues predominate over residues 151–167; sequence DDAKDSESANVSDKEGG. Position 162 is a phosphoserine (Ser-162). The homeobox DNA-binding region spans 180–239; the sequence is RRGPRTTIKAKQLETLKAAFAATPKPTRHIREQLAQETGLNMRVIQVWFQNRRSKERRMK. A compositionally biased stretch (low complexity) spans 315-327; the sequence is PSSGPSGTPLGGL. Positions 352 to 362 are enriched in pro residues; the sequence is GDSPSPEPSLP.

As to quaternary structure, interacts with LDB1 via the tandem LIM domains.

It localises to the nucleus. Functionally, potential transcription factor. May play a role in early mesoderm formation and later in lateral mesoderm differentiation and neurogenesis. The chain is LIM/homeobox protein Lhx1 (Lhx1) from Mesocricetus auratus (Golden hamster).